Reading from the N-terminus, the 209-residue chain is Mitochondrial import inner membrane translocase subunit Tim23 (209 aa).

Helical transmembrane passes span 73 to 93, 125 to 145, and 180 to 200; these read FELAFFTIGGCCMSGAAFGAV, ALWANTLGSLALLYSAFGVII, and GGLAGLALTSAFALYNNWEHI.

This sequence belongs to the Tim17/Tim22/Tim23 family. In terms of assembly, component of the TIM23 complex at least composed of timm23, timm17 and timm50. The complex interacts with the timm44 component of the PAM complex.

Its subcellular location is the mitochondrion inner membrane. Its function is as follows. Essential component of the TIM23 complex, a complex that mediates the translocation of transit peptide-containing proteins across the mitochondrial inner membrane. This Xenopus tropicalis (Western clawed frog) protein is Mitochondrial import inner membrane translocase subunit Tim23 (timm23).